The primary structure comprises 640 residues: UvrABC system protein C (640 aa).

One can recognise a GIY-YIG domain in the interval 22-101 (NDPGCYLMKD…IKSHQPYFNV (80 aa)). In terms of domain architecture, UVR spans 211 to 246 (DELRILLEKQMISFSESLKFEEAGSVRDQLKGIDRL).

Belongs to the UvrC family. Interacts with UvrB in an incision complex.

Its subcellular location is the cytoplasm. The UvrABC repair system catalyzes the recognition and processing of DNA lesions. UvrC both incises the 5' and 3' sides of the lesion. The N-terminal half is responsible for the 3' incision and the C-terminal half is responsible for the 5' incision. In Prochlorococcus marinus (strain NATL2A), this protein is UvrABC system protein C.